Reading from the N-terminus, the 393-residue chain is Enoyl-[acyl-carrier-protein] reductase [NADH] (393 aa).

Residues 48–53, 74–75, 111–112, and 139–140 contribute to the NAD(+) site; these read GSSTGY, FE, DA, and LA. Substrate is bound at residue Y225. Y235 functions as the Proton donor in the catalytic mechanism. NAD(+) contacts are provided by residues K244 and 273-275; that span reads LVT.

It belongs to the TER reductase family. Monomer.

The enzyme catalyses a 2,3-saturated acyl-[ACP] + NAD(+) = a (2E)-enoyl-[ACP] + NADH + H(+). It functions in the pathway lipid metabolism; fatty acid biosynthesis. Functionally, involved in the final reduction of the elongation cycle of fatty acid synthesis (FAS II). Catalyzes the reduction of a carbon-carbon double bond in an enoyl moiety that is covalently linked to an acyl carrier protein (ACP). The chain is Enoyl-[acyl-carrier-protein] reductase [NADH] from Pseudoalteromonas atlantica (strain T6c / ATCC BAA-1087).